A 191-amino-acid polypeptide reads, in one-letter code: Small ribosomal subunit protein uS7 (191 aa).

Positions 56-80 (NKSGEQGDGDGESGGKAGGIKKRSL) are disordered.

This sequence belongs to the universal ribosomal protein uS7 family. Part of the 30S ribosomal subunit. Contacts proteins S9 and S11.

Functionally, one of the primary rRNA binding proteins, it binds directly to 16S rRNA where it nucleates assembly of the head domain of the 30S subunit. Is located at the subunit interface close to the decoding center, probably blocks exit of the E-site tRNA. In Coxiella burnetii (strain RSA 493 / Nine Mile phase I), this protein is Small ribosomal subunit protein uS7.